Here is a 240-residue protein sequence, read N- to C-terminus: 1-(5-phosphoribosyl)-5-[(5-phosphoribosylamino)methylideneamino] imidazole-4-carboxamide isomerase 1 (240 aa).

Asp-8 acts as the Proton acceptor in catalysis. Asp-129 serves as the catalytic Proton donor.

This sequence belongs to the HisA/HisF family.

It localises to the cytoplasm. It catalyses the reaction 1-(5-phospho-beta-D-ribosyl)-5-[(5-phospho-beta-D-ribosylamino)methylideneamino]imidazole-4-carboxamide = 5-[(5-phospho-1-deoxy-D-ribulos-1-ylimino)methylamino]-1-(5-phospho-beta-D-ribosyl)imidazole-4-carboxamide. Its pathway is amino-acid biosynthesis; L-histidine biosynthesis; L-histidine from 5-phospho-alpha-D-ribose 1-diphosphate: step 4/9. The protein is 1-(5-phosphoribosyl)-5-[(5-phosphoribosylamino)methylideneamino] imidazole-4-carboxamide isomerase 1 of Ruegeria pomeroyi (strain ATCC 700808 / DSM 15171 / DSS-3) (Silicibacter pomeroyi).